Here is a 521-residue protein sequence, read N- to C-terminus: Bifunctional purine biosynthesis protein PurH (521 aa).

One can recognise an MGS-like domain in the interval 1 to 145 (MIKQALISVS…KNHRDVTVIV (145 aa)).

It belongs to the PurH family.

The catalysed reaction is (6R)-10-formyltetrahydrofolate + 5-amino-1-(5-phospho-beta-D-ribosyl)imidazole-4-carboxamide = 5-formamido-1-(5-phospho-D-ribosyl)imidazole-4-carboxamide + (6S)-5,6,7,8-tetrahydrofolate. It carries out the reaction IMP + H2O = 5-formamido-1-(5-phospho-D-ribosyl)imidazole-4-carboxamide. Its pathway is purine metabolism; IMP biosynthesis via de novo pathway; 5-formamido-1-(5-phospho-D-ribosyl)imidazole-4-carboxamide from 5-amino-1-(5-phospho-D-ribosyl)imidazole-4-carboxamide (10-formyl THF route): step 1/1. It functions in the pathway purine metabolism; IMP biosynthesis via de novo pathway; IMP from 5-formamido-1-(5-phospho-D-ribosyl)imidazole-4-carboxamide: step 1/1. The protein is Bifunctional purine biosynthesis protein PurH of Burkholderia multivorans (strain ATCC 17616 / 249).